A 273-amino-acid chain; its full sequence is MIPFGSRLHAAIADRGPLCVGIDPHAGLLSDWGLGDDVAGLETFALEVVEAIAPYVSVVKPQSAFFERFGSRGIAVLERVIAQSRAAGALVLLDVKRGDIGSTSQAYADAYLDPTSPLASDAITVSPFLGFGSLDPIVETARTHGAGLFVLALTSNKEGPEVQHARVDGVAGGGTVAGLMLDHLRRLNAEASPLGSFGAVVGATIGSTDEDLAFNGPVLAPGFGAQGGTIADVRRLFGAAAAVLPSSSRDVLRLQDPDVMRDFVVRTNDELRS.

The Proton donor role is filled by Lys96.

This sequence belongs to the OMP decarboxylase family. Type 2 subfamily.

It carries out the reaction orotidine 5'-phosphate + H(+) = UMP + CO2. It participates in pyrimidine metabolism; UMP biosynthesis via de novo pathway; UMP from orotate: step 2/2. The protein is Orotidine 5'-phosphate decarboxylase of Nocardioides sp. (strain ATCC BAA-499 / JS614).